A 149-amino-acid chain; its full sequence is D-aminoacyl-tRNA deacylase (149 aa).

The short motif at 137-138 (GP) is the Gly-cisPro motif, important for rejection of L-amino acids element.

This sequence belongs to the DTD family. As to quaternary structure, homodimer.

It is found in the cytoplasm. The enzyme catalyses glycyl-tRNA(Ala) + H2O = tRNA(Ala) + glycine + H(+). It catalyses the reaction a D-aminoacyl-tRNA + H2O = a tRNA + a D-alpha-amino acid + H(+). Functionally, an aminoacyl-tRNA editing enzyme that deacylates mischarged D-aminoacyl-tRNAs. Also deacylates mischarged glycyl-tRNA(Ala), protecting cells against glycine mischarging by AlaRS. Acts via tRNA-based rather than protein-based catalysis; rejects L-amino acids rather than detecting D-amino acids in the active site. By recycling D-aminoacyl-tRNA to D-amino acids and free tRNA molecules, this enzyme counteracts the toxicity associated with the formation of D-aminoacyl-tRNA entities in vivo and helps enforce protein L-homochirality. This is D-aminoacyl-tRNA deacylase from Syntrophus aciditrophicus (strain SB).